Here is a 467-residue protein sequence, read N- to C-terminus: Ethanolamine ammonia-lyase reactivase EutA (467 aa).

Belongs to the EutA family.

The protein localises to the bacterial microcompartment. It functions in the pathway amine and polyamine degradation; ethanolamine degradation. In terms of biological role, reactivates suicidally inhibited ethanolamine ammonia-lyase (EAL), cyanocobalamin-inactivated EAL and O(2)-inactivated EAL; requires Mg(2+), ATP and adenosylcobalamin. Reactivation probably occurs by the ATP-dependent exchange of cobalamin. Protects EAL from inhibition by CN-B12, does not have adenosylation activity. Its function is as follows. Expression of the eut operon allows this bacteria to use ethanolamine as a carbon, nitrogen and energy source. It relies on cobalamin (vitamin B12) both as a cofactor for the ethanolamine ammonia-lyase (EAL) activity and to induce the operon. EA enhances bacterial survival in macrophages in a concentration-dependent manner, suggesting it is an important nutrient during infection. The protein is Ethanolamine ammonia-lyase reactivase EutA of Salmonella typhimurium (strain LT2 / SGSC1412 / ATCC 700720).